The sequence spans 605 residues: Dynein axonemal intermediate chain 2 (605 aa).

WD repeat units lie at residues 150–203 (KTIN…IWDL), 208–246 (KPEL…CWDT), 253–294 (AELS…WWDI), 301–347 (TEVV…SCNR), 355–393 (KIVC…IWSE), 399–437 (SIMW…IWDF), and 443–481 (DPTL…LLEV). The tract at residues 568–605 (IKLTPVPQQPSPEEDQVVEEGEEAAGEEGDEEVEEDLA) is disordered. The span at 579 to 605 (PEEDQVVEEGEEAAGEEGDEEVEEDLA) shows a compositional bias: acidic residues.

The protein belongs to the dynein intermediate chain family. Consists of at least two heavy chains and a number of intermediate and light chains. Interacts with DNAAF2. Interacts with DNAAF6/PIH1D3. Interacts with HEATR2; probably involved in outer arm dynein assembly. Interacts with CFAP53. Highly expressed in trachea and testis. Expressed in respiratory ciliated cells (at protein level).

Its subcellular location is the cytoplasm. It is found in the cytoskeleton. The protein resides in the cilium axoneme. It localises to the dynein axonemal particle. In terms of biological role, part of the dynein complex of respiratory cilia. The sequence is that of Dynein axonemal intermediate chain 2 from Homo sapiens (Human).